The primary structure comprises 160 residues: Eukaryotic translation initiation factor 5A-3 (160 aa).

Basic and acidic residues predominate over residues 1–12 (MSDEEHHFESKA). The interval 1–21 (MSDEEHHFESKADAGASKTYP) is disordered. At Lys-52 the chain carries Hypusine.

This sequence belongs to the eIF-5A family. In terms of processing, lys-52 undergoes hypusination, a unique post-translational modification that consists in the addition of a butylamino group from spermidine to lysine side chain, leading to the formation of the unusual amino acid hypusine. eIF-5As are the only known proteins to undergo this modification, which is essential for their function.

Functionally, translation factor that promotes translation elongation and termination, particularly upon ribosome stalling at specific amino acid sequence contexts. Binds between the exit (E) and peptidyl (P) site of the ribosome and promotes rescue of stalled ribosome: specifically required for efficient translation of polyproline-containing peptides as well as other motifs that stall the ribosome. Acts as a ribosome quality control (RQC) cofactor by joining the RQC complex to facilitate peptidyl transfer during CAT tailing step. The chain is Eukaryotic translation initiation factor 5A-3 (EIF5A3) from Solanum tuberosum (Potato).